The primary structure comprises 122 residues: Non-specific lipid-transfer protein (122 aa).

Residues 1 to 19 form the signal peptide; it reads MGVSRACFVVMVVVYMVVA. The propeptide occupies 20–29; it reads ATPNVKLAEA. Intrachain disulfides connect C32–C81, C42–C58, C59–C104, and C79–C118.

As to quaternary structure, monomer.

Plant non-specific lipid-transfer proteins transfer phospholipids as well as galactolipids across membranes. May play a role in wax or cutin deposition in the cell walls of expanding epidermal cells and certain secretory tissues. Binds saturated fatty acids, unsaturated fatty acids, lysolipids and, with highest efficiency, jasmonic acid. Has weak antimicrobial activity against fungi. Inhibits spore germination and hyphae elongation in A.niger VKM F-2259 and N.crassa VKM F-184. Has no antibacterial activity against A.tumefaciens A281, C.michiganensis VKM Ac-144 and P.syringae VKM B-1546. The protein is Non-specific lipid-transfer protein of Anethum graveolens (Dill).